A 126-amino-acid polypeptide reads, in one-letter code: Fluoride-specific ion channel FluC (126 aa).

A run of 4 helical transmembrane segments spans residues 3–23 (MILAVAAGGGLGAVARYLTGV), 39–59 (TVNVTGSFAMGVLAGLGAHVW), 71–91 (VGVLGGFTTFSSFSLDVALLV), and 101–121 (AYVAASFLLSVGGLFAGLALI). Positions 75 and 78 each coordinate Na(+).

This sequence belongs to the fluoride channel Fluc/FEX (TC 1.A.43) family.

Its subcellular location is the cell inner membrane. The catalysed reaction is fluoride(in) = fluoride(out). With respect to regulation, na(+) is not transported, but it plays an essential structural role and its presence is essential for fluoride channel function. Its function is as follows. Fluoride-specific ion channel. Important for reducing fluoride concentration in the cell, thus reducing its toxicity. This is Fluoride-specific ion channel FluC from Rhodospirillum centenum (strain ATCC 51521 / SW).